The following is a 90-amino-acid chain: MNKLFFVVFLCLIISVLAIGPADLGCTDMPQAEFDEKNANCEKCGNEEGFGEEMVSRCRDKCFTDNFYQSCVDLLNKVYEEKDVPVPPEE.

The signal sequence occupies residues 1–18; that stretch reads MNKLFFVVFLCLIISVLA.

It belongs to the arthropod CHH/MIH/GIH/VIH hormone family. Expressed by the venom gland.

The protein localises to the secreted. Its function is as follows. May increase the toxicity of alpha-latrotoxin and/or other venom components. Is non-toxic to mice and to the cockroach Periplaneta americana. In Latrodectus geometricus (Brown widow spider), this protein is Alpha-latrotoxin associated low molecular weight protein.